The chain runs to 127 residues: Two-component response regulator ORR41 (127 aa).

A Response regulatory domain is found at 7-125; the sequence is RVLLVEDEEI…KLGVILAKFR (119 aa). Position 60 is a 4-aspartylphosphate (aspartate 60).

Belongs to the ARR family. Type-C subfamily. In terms of processing, two-component system major event consists of a His-to-Asp phosphorelay between a sensor histidine kinase (HK) and a response regulator (RR). In plants, the His-to-Asp phosphorelay involves an additional intermediate named Histidine-containing phosphotransfer protein (HPt). This multistep phosphorelay consists of a His-Asp-His-Asp sequential transfer of a phosphate group between first a His and an Asp of the HK protein, followed by the transfer to a conserved His of the HPt protein and finally the transfer to an Asp in the receiver domain of the RR protein.

Functions as a response regulator involved in His-to-Asp phosphorelay signal transduction system. Phosphorylation of the Asp residue in the receiver domain activates the ability of the protein to promote the transcription of target genes. May directly activate some type-A response regulators in response to cytokinins. The polypeptide is Two-component response regulator ORR41 (Oryza sativa subsp. japonica (Rice)).